The primary structure comprises 252 residues: Imidazole glycerol phosphate synthase subunit HisF (252 aa).

Residues Asp11 and Asp130 contribute to the active site.

Belongs to the HisA/HisF family. Heterodimer of HisH and HisF.

It is found in the cytoplasm. The enzyme catalyses 5-[(5-phospho-1-deoxy-D-ribulos-1-ylimino)methylamino]-1-(5-phospho-beta-D-ribosyl)imidazole-4-carboxamide + L-glutamine = D-erythro-1-(imidazol-4-yl)glycerol 3-phosphate + 5-amino-1-(5-phospho-beta-D-ribosyl)imidazole-4-carboxamide + L-glutamate + H(+). Its pathway is amino-acid biosynthesis; L-histidine biosynthesis; L-histidine from 5-phospho-alpha-D-ribose 1-diphosphate: step 5/9. In terms of biological role, IGPS catalyzes the conversion of PRFAR and glutamine to IGP, AICAR and glutamate. The HisF subunit catalyzes the cyclization activity that produces IGP and AICAR from PRFAR using the ammonia provided by the HisH subunit. The polypeptide is Imidazole glycerol phosphate synthase subunit HisF (Geobacillus thermodenitrificans (strain NG80-2)).